A 166-amino-acid polypeptide reads, in one-letter code: Holin-like protein TcdE (166 aa).

The next 4 membrane-spanning stretches (helical) occupy residues 15–35, 36–56, 77–97, and 111–131; these read IFFY…LSEH, IFIK…CLSA, MIAC…NFLF, and HLGI…VSIL.

It belongs to the bacteriophage holin family. In terms of assembly, homomultimer.

The protein localises to the cell membrane. Functionally, holin-like protein required for secretion of toxins A and B (TcdA and TcdB). Facilitates the release of toxins to the extracellular environment without causing the bacterial cell lysis. In terms of biological role, has weak activity, suggesting that it may act as a antiholin when multiple forms are produced. This Clostridioides difficile (Peptoclostridium difficile) protein is Holin-like protein TcdE.